Here is a 696-residue protein sequence, read N- to C-terminus: DNA ligase (696 aa).

NAD(+) is bound by residues 36-40, 85-86, and glutamate 123; these read DAEYD and SL. The active-site N6-AMP-lysine intermediate is lysine 125. NAD(+) contacts are provided by arginine 146, glutamate 181, lysine 319, and lysine 343. Positions 437, 440, 455, and 461 each coordinate Zn(2+). Positions 618 to 696 constitute a BRCT domain; it reads PEGTSLAGKT…EDGLKALLGL (79 aa).

This sequence belongs to the NAD-dependent DNA ligase family. LigA subfamily. Mg(2+) is required as a cofactor. Requires Mn(2+) as cofactor.

It carries out the reaction NAD(+) + (deoxyribonucleotide)n-3'-hydroxyl + 5'-phospho-(deoxyribonucleotide)m = (deoxyribonucleotide)n+m + AMP + beta-nicotinamide D-nucleotide.. Its function is as follows. DNA ligase that catalyzes the formation of phosphodiester linkages between 5'-phosphoryl and 3'-hydroxyl groups in double-stranded DNA using NAD as a coenzyme and as the energy source for the reaction. It is essential for DNA replication and repair of damaged DNA. This is DNA ligase from Bordetella parapertussis (strain 12822 / ATCC BAA-587 / NCTC 13253).